A 3795-amino-acid polypeptide reads, in one-letter code: NBPF family member NBPF10 (3795 aa).

Positions Arg75–Ala119 form a coiled coil. Positions Lys161–Pro200 are disordered. A compositionally biased stretch (acidic residues) spans Glu165–Glu177. In terms of domain architecture, Olduvai 1 spans Glu165 to Pro259. Residues Glu190–Pro200 show a composition bias toward basic and acidic residues. Residues Arg346–Ala390 adopt a coiled-coil conformation. 41 Olduvai domains span residues Glu436 to Pro528, Glu529 to Gly600, Arg601 to Pro692, Ser695 to Asp750, Arg751 to Lys843, Glu844 to Pro936, Ser939 to Asp994, Arg995 to Lys1087, Glu1088 to Pro1180, Ser1183 to Asp1238, Arg1239 to Lys1331, Glu1332 to Pro1424, Ser1427 to Asp1482, Arg1483 to Lys1575, Glu1576 to Pro1668, Ser1671 to Asp1726, Arg1727 to Lys1819, Glu1820 to Pro1912, Ser1915 to Asp1970, Arg1971 to Lys2063, Glu2064 to Pro2156, Ser2159 to Asp2214, Arg2215 to Lys2307, Glu2308 to Pro2400, Ser2403 to Asp2458, Arg2459 to Lys2551, Glu2552 to Pro2644, Ser2647 to Asp2702, Arg2703 to Lys2795, Glu2796 to Pro2888, Ser2891 to Asp2946, Arg2947 to Lys3039, Glu3040 to Pro3132, Ser3135 to Asp3190, Arg3191 to Lys3283, Glu3284 to Pro3376, Ser3379 to Asp3434, Arg3435 to Lys3527, Glu3528 to Pro3620, Ser3623 to Lys3696, and Glu3697 to Gln3795. 2 disordered regions span residues Glu451–Leu475 and Trp520–Ser566. Acidic residues-rich tracts occupy residues Asn530–Glu539 and Glu550–Asp562. Positions Lys830–Leu868 are disordered. Residues Gly831 to Arg849 show a composition bias toward basic residues. A disordered region spans residues Lys1073–Arg1109. The segment covering Gly1075–Arg1093 has biased composition (basic residues). Disordered regions lie at residues Lys1242–Leu1261 and Lys1318–Arg1353. The segment covering Gly1319 to Arg1337 has biased composition (basic residues). The disordered stretch occupies residues Lys1562–Leu1600. Over residues Gly1563 to Arg1581 the composition is skewed to basic residues. The disordered stretch occupies residues Lys1806–Leu1844. The segment covering Gly1807–Arg1825 has biased composition (basic residues). A disordered region spans residues Lys2050–Leu2088. Residues Gly2051–Arg2069 are compositionally biased toward basic residues. Residues Lys2294 to Leu2332 form a disordered region. The span at Gly2295–Arg2313 shows a compositional bias: basic residues. The interval Lys2538–Leu2576 is disordered. Positions Gly2539–Arg2557 are enriched in basic residues. The segment at Lys2782–Leu2820 is disordered. The span at Gly2783 to Arg2801 shows a compositional bias: basic residues. The disordered stretch occupies residues Lys3026–Leu3064. A compositionally biased stretch (basic residues) spans Gly3027 to Arg3045. 2 disordered regions span residues Lys3194 to Leu3213 and Lys3270 to Leu3308. A compositionally biased stretch (basic residues) spans Gly3271–Arg3289. Disordered regions lie at residues Lys3514–Leu3552 and Gly3684–Leu3716. 2 stretches are compositionally biased toward basic residues: residues Gly3515 to Arg3533 and Gly3684 to Arg3702.

The protein belongs to the NBPF family.

It is found in the cytoplasm. This is NBPF family member NBPF10 from Homo sapiens (Human).